The following is a 275-amino-acid chain: NH(3)-dependent NAD(+) synthetase (275 aa).

50-57 (GISGGVDS) is an ATP binding site. Mg(2+) is bound at residue D56. Position 147 (R147) interacts with deamido-NAD(+). An ATP-binding site is contributed by T167. A Mg(2+)-binding site is contributed by E172. Deamido-NAD(+)-binding residues include K180 and D187. The ATP site is built by K196 and T218. Residue 267-268 (HK) coordinates deamido-NAD(+).

The protein belongs to the NAD synthetase family. In terms of assembly, homodimer.

It carries out the reaction deamido-NAD(+) + NH4(+) + ATP = AMP + diphosphate + NAD(+) + H(+). Its pathway is cofactor biosynthesis; NAD(+) biosynthesis; NAD(+) from deamido-NAD(+) (ammonia route): step 1/1. Its function is as follows. Catalyzes the ATP-dependent amidation of deamido-NAD to form NAD. Uses ammonia as a nitrogen source. This Pseudomonas putida (strain ATCC 47054 / DSM 6125 / CFBP 8728 / NCIMB 11950 / KT2440) protein is NH(3)-dependent NAD(+) synthetase.